The sequence spans 416 residues: Venom allergen 5 (416 aa).

An N-terminal signal peptide occupies residues 1–24 (MKGILLLFLKLVVLFVYLCSSVLS). Residues 57–217 (DDRNTIINLH…NYGPAGNLDD (161 aa)) form the SCP domain. Arg82 is subject to Arginine amide; in Cryptide Pep-4.

Belongs to the CRISP family. Venom allergen 5-like subfamily. Contains 9 disulfide bonds. As to expression, expressed by the venom gland.

It localises to the secreted. In terms of biological role, presents weak lactate dehydrogenase (LDH) release from mast cells. Does not induce hemolytic activity, mast cell degranulation, and antimicrobial effects. In vivo, injection into mice causes moderate edema formation, but induces very weak or no change in nociceptive sensibility. It also causes an alteration in rearing (standing on hind limbs), but does not impact locomotion. The protein is Venom allergen 5 of Tityus serrulatus (Brazilian scorpion).